The following is a 302-amino-acid chain: Deoxyhypusine hydroxylase (302 aa).

At methionine 1 the chain carries N-acetylmethionine. 5 HEAT-like PBS-type repeats span residues 54–80 (LKHE…VLQD), 87–113 (VRHE…YSSD), 174–200 (ERYR…GLHC), 205–231 (FRHE…ALAR), and 238–264 (VRHE…HADD). Histidine 56, histidine 89, and glutamate 90 together coordinate Fe cation. The Fe cation site is built by histidine 207, histidine 240, and glutamate 241.

This sequence belongs to the deoxyhypusine hydroxylase family. Fe(2+) is required as a cofactor.

It carries out the reaction [eIF5A protein]-deoxyhypusine + AH2 + O2 = [eIF5A protein]-hypusine + A + H2O. The protein operates within protein modification; eIF5A hypusination. In terms of biological role, catalyzes the hydroxylation of the N(6)-(4-aminobutyl)-L-lysine intermediate produced by deoxyhypusine synthase/DHPS on a critical lysine of the eukaryotic translation initiation factor 5A/eIF-5A. This is the second step of the post-translational modification of that lysine into an unusual amino acid residue named hypusine. Hypusination is unique to mature eIF-5A factor and is essential for its function. This chain is Deoxyhypusine hydroxylase, found in Homo sapiens (Human).